We begin with the raw amino-acid sequence, 150 residues long: Small ribosomal subunit protein eS19 (150 aa).

Belongs to the eukaryotic ribosomal protein eS19 family. Part of the 30S ribosomal subunit.

Functionally, may be involved in maturation of the 30S ribosomal subunit. This is Small ribosomal subunit protein eS19 from Thermococcus kodakarensis (strain ATCC BAA-918 / JCM 12380 / KOD1) (Pyrococcus kodakaraensis (strain KOD1)).